The sequence spans 511 residues: MTIILKPGSVPLETLKKIYREGLPVRIDPAFHAGIEKAAARIAEIAAGDAPVYGINTGFGKLASIRIAAGDVATLQRNLILPHCCGVGEPLSENIVRLIMALKLVSLGRGASGVRLEVITLIEAMLEKGVIPMIPEKGSVGASGDLAPLAHMTAAMIGEGEAFYRGERLSGAKALGKAGLKPVVLAAKEGLALINGTQTSTALALAGLFRAHRAARTALITGALSTDAAMGSDAPFHEEIHQLRGHKGQIDAGRALRTLLEGSAIRRSHLEGDQRVQDPYCIRCQPQVDGACLDILRQAARTLEIEANAVTDNPLVLSDGRAVSGGNFHAEPVAFAADQIALAVCEIGAISQRRIALLVDPSLSFGLPAFLARKPGLNSGLMIAEVTSAALMSENKQMAHPASVDSTPTSANQEDHVSMACNGARRLLQMTANLNAIIGIEALTGALGVELRKPLTTSAELAKVIAALRAKVATLEEDRYMADDLKAAAELVADGTLSGVISAGILPDLEA.

The segment at residues 142–144 (ASG) is a cross-link (5-imidazolinone (Ala-Gly)). The residue at position 143 (serine 143) is a 2,3-didehydroalanine (Ser).

This sequence belongs to the PAL/histidase family. Post-translationally, contains an active site 4-methylidene-imidazol-5-one (MIO), which is formed autocatalytically by cyclization and dehydration of residues Ala-Ser-Gly.

The protein localises to the cytoplasm. The catalysed reaction is L-histidine = trans-urocanate + NH4(+). The protein operates within amino-acid degradation; L-histidine degradation into L-glutamate; N-formimidoyl-L-glutamate from L-histidine: step 1/3. The protein is Histidine ammonia-lyase of Brucella ovis (strain ATCC 25840 / 63/290 / NCTC 10512).